The sequence spans 58 residues: UPF0391 membrane protein OCAR_5266/OCA5_c27040 (58 aa).

The next 2 membrane-spanning stretches (helical) occupy residues tryptophan 4–alanine 24 and isoleucine 30–leucine 50.

It belongs to the UPF0391 family.

It is found in the cell membrane. The sequence is that of UPF0391 membrane protein OCAR_5266/OCA5_c27040 from Afipia carboxidovorans (strain ATCC 49405 / DSM 1227 / KCTC 32145 / OM5) (Oligotropha carboxidovorans).